Consider the following 114-residue polypeptide: Large ribosomal subunit protein uL22 (114 aa).

It belongs to the universal ribosomal protein uL22 family. As to quaternary structure, part of the 50S ribosomal subunit.

In terms of biological role, this protein binds specifically to 23S rRNA; its binding is stimulated by other ribosomal proteins, e.g. L4, L17, and L20. It is important during the early stages of 50S assembly. It makes multiple contacts with different domains of the 23S rRNA in the assembled 50S subunit and ribosome. The globular domain of the protein is located near the polypeptide exit tunnel on the outside of the subunit, while an extended beta-hairpin is found that lines the wall of the exit tunnel in the center of the 70S ribosome. In Lysinibacillus sphaericus (strain C3-41), this protein is Large ribosomal subunit protein uL22.